Reading from the N-terminus, the 76-residue chain is Small ribosomal subunit protein bS18 (76 aa).

Belongs to the bacterial ribosomal protein bS18 family. As to quaternary structure, part of the 30S ribosomal subunit. Forms a tight heterodimer with protein bS6.

In terms of biological role, binds as a heterodimer with protein bS6 to the central domain of the 16S rRNA, where it helps stabilize the platform of the 30S subunit. This chain is Small ribosomal subunit protein bS18, found in Mesoplasma florum (strain ATCC 33453 / NBRC 100688 / NCTC 11704 / L1) (Acholeplasma florum).